Here is a 230-residue protein sequence, read N- to C-terminus: MKITWLGHSGFRIAIEQAVLLVDPWLTGNPLFPADRREEALAGATHILITHGHGDHTGDTVAIAKERGLPVVGIYDLVTWLQEKEGIDGIGFNKGGTVTLGGARVTMVQATHSSSMSGEAGPIYTGTESGYMIAGEGHVIYLSGDTDIMADMGWMGEYHRPDVGILSAGGHFTMDMKRAAFAARKYFDFRTVIPCHYRTFPLLEQSAEALKEGLPGVEVIEPQVLVPIDI.

This sequence belongs to the UPF0173 family.

The sequence is that of UPF0173 metal-dependent hydrolase RHOS4_08540 from Cereibacter sphaeroides (strain ATCC 17023 / DSM 158 / JCM 6121 / CCUG 31486 / LMG 2827 / NBRC 12203 / NCIMB 8253 / ATH 2.4.1.) (Rhodobacter sphaeroides).